The primary structure comprises 912 residues: Probable dipeptidyl-aminopeptidase B (912 aa).

A disordered region spans residues 1-74 (MSSALSPEGD…GPFLGPGASL (74 aa)). Residues 1-85 (MSSALSPEGD…REPMDRGLRR (85 aa)) are Cytoplasmic-facing. The segment covering 16-27 (DSLSSVSTTSLV) has biased composition (low complexity). The span at 30–50 (RIQEKTEMDADNDKEKDPRAL) shows a compositional bias: basic and acidic residues. A compositionally biased stretch (acidic residues) spans 51–63 (DDEDPLRDEDDLE). A helical; Signal-anchor for type II membrane protein membrane pass occupies residues 86–106 (ILIIVAVVFIGGWLAGLGIFI). The Vacuolar segment spans residues 107–912 (ASGSYHHESD…KRHMVPQALV (806 aa)). Residue asparagine 344 is glycosylated (N-linked (GlcNAc...) asparagine). The active-site Charge relay system is the serine 749. An N-linked (GlcNAc...) asparagine glycan is attached at asparagine 808. Catalysis depends on charge relay system residues aspartate 826 and histidine 859. The segment at 892-912 (PQPQKDPVEKEKRHMVPQALV) is disordered.

Belongs to the peptidase S9B family.

The protein resides in the vacuole membrane. It catalyses the reaction Release of an N-terminal dipeptide, Xaa-Yaa-|-Zaa-, from a polypeptide, preferentially when Yaa is Pro, provided Zaa is neither Pro nor hydroxyproline.. In terms of biological role, type IV dipeptidyl-peptidase which removes N-terminal dipeptides sequentially from polypeptides having unsubstituted N-termini provided that the penultimate residue is proline. The protein is Probable dipeptidyl-aminopeptidase B (DAPB) of Fusarium vanettenii (strain ATCC MYA-4622 / CBS 123669 / FGSC 9596 / NRRL 45880 / 77-13-4) (Fusarium solani subsp. pisi).